The primary structure comprises 1141 residues: DNA-directed RNA polymerase subunit beta (1141 aa).

A disordered region spans residues 1117–1141; the sequence is GINISREEPPGQLDDTPDTFSRGGM.

Belongs to the RNA polymerase beta chain family. As to quaternary structure, the RNAP catalytic core consists of 2 alpha, 1 beta, 1 beta' and 1 omega subunit. When a sigma factor is associated with the core the holoenzyme is formed, which can initiate transcription.

The catalysed reaction is RNA(n) + a ribonucleoside 5'-triphosphate = RNA(n+1) + diphosphate. In terms of biological role, DNA-dependent RNA polymerase catalyzes the transcription of DNA into RNA using the four ribonucleoside triphosphates as substrates. This Rubrobacter xylanophilus (strain DSM 9941 / JCM 11954 / NBRC 16129 / PRD-1) protein is DNA-directed RNA polymerase subunit beta.